Reading from the N-terminus, the 64-residue chain is Prokaryotic ubiquitin-like protein Pup (64 aa).

The segment at 1–35 (MAQGGQVSAGGGRRDDDEPIEQTSGAGTQQVNVTG) is disordered. Positions 21 to 33 (EQTSGAGTQQVNV) are enriched in polar residues. Residues 21–58 (EQTSGAGTQQVNVTGTDDLLDEIDGLLENNAEEFVRSY) form an ARC ATPase binding region. Glutamine 64 carries the deamidated glutamine modification. Glutamine 64 is covalently cross-linked (Isoglutamyl lysine isopeptide (Gln-Lys) (interchain with K-? in acceptor proteins)).

It belongs to the prokaryotic ubiquitin-like protein family. Strongly interacts with the proteasome-associated ATPase ARC through a hydrophobic interface; the interacting region of Pup lies in its C-terminal half. There is one Pup binding site per ARC hexamer ring. Is modified by deamidation of its C-terminal glutamine to glutamate by the deamidase Dop, a prerequisite to the subsequent pupylation process.

It functions in the pathway protein degradation; proteasomal Pup-dependent pathway. In terms of biological role, protein modifier that is covalently attached to lysine residues of substrate proteins, thereby targeting them for proteasomal degradation. The tagging system is termed pupylation. The chain is Prokaryotic ubiquitin-like protein Pup from Corynebacterium jeikeium (strain K411).